The sequence spans 115 residues: NAD(P)H-quinone oxidoreductase subunit M (115 aa).

The protein belongs to the complex I NdhM subunit family. In terms of assembly, NDH-1 can be composed of about 15 different subunits; different subcomplexes with different compositions have been identified which probably have different functions.

Its subcellular location is the cellular thylakoid membrane. The catalysed reaction is a plastoquinone + NADH + (n+1) H(+)(in) = a plastoquinol + NAD(+) + n H(+)(out). It catalyses the reaction a plastoquinone + NADPH + (n+1) H(+)(in) = a plastoquinol + NADP(+) + n H(+)(out). NDH-1 shuttles electrons from an unknown electron donor, via FMN and iron-sulfur (Fe-S) centers, to quinones in the respiratory and/or the photosynthetic chain. The immediate electron acceptor for the enzyme in this species is believed to be plastoquinone. Couples the redox reaction to proton translocation, and thus conserves the redox energy in a proton gradient. Cyanobacterial NDH-1 also plays a role in inorganic carbon-concentration. This Prochlorococcus marinus (strain MIT 9515) protein is NAD(P)H-quinone oxidoreductase subunit M.